A 246-amino-acid chain; its full sequence is Pyruvate formate-lyase 1-activating enzyme (246 aa).

In terms of domain architecture, Radical SAM core spans 16 to 239; it reads VDGPGIRFIT…MERVKGILEQ (224 aa). Residues Cys-30, Cys-34, and Cys-37 each coordinate [4Fe-4S] cluster. Residues 36–38, Gly-79, 130–132, and His-203 contribute to the S-adenosyl-L-methionine site; these read YCH and DLK.

This sequence belongs to the organic radical-activating enzymes family. The cofactor is [4Fe-4S] cluster.

It localises to the cytoplasm. The enzyme catalyses glycyl-[formate C-acetyltransferase] + reduced [flavodoxin] + S-adenosyl-L-methionine = glycin-2-yl radical-[formate C-acetyltransferase] + semiquinone [flavodoxin] + 5'-deoxyadenosine + L-methionine + H(+). Functionally, activation of pyruvate formate-lyase 1 under anaerobic conditions by generation of an organic free radical, using S-adenosylmethionine and reduced flavodoxin as cosubstrates to produce 5'-deoxy-adenosine. In Escherichia coli O157:H7, this protein is Pyruvate formate-lyase 1-activating enzyme (pflA).